Reading from the N-terminus, the 397-residue chain is P2X purinoceptor 3 (397 aa).

The Cytoplasmic portion of the chain corresponds to Met-1–Ser-20. Residues Trp-21–Phe-43 traverse the membrane as a helical segment. Topologically, residues Leu-44–Ile-322 are extracellular. Positions 63 and 65 each coordinate ATP. Disulfide bonds link Cys-107/Cys-153, Cys-116/Cys-137, and Cys-122/Cys-147. Glu-111 lines the Mg(2+) pocket. An N-linked (GlcNAc...) asparagine glycan is attached at Asn-139. Asp-158 serves as a coordination point for Mg(2+). Position 158 (Asp-158) interacts with Ca(2+). Asn-170 is a glycosylation site (N-linked (GlcNAc...) asparagine). ATP is bound at residue Thr-172. An N-linked (GlcNAc...) asparagine glycan is attached at Asn-194. Cystine bridges form between Cys-203/Cys-213 and Cys-247/Cys-256. Residues Ser-275, Asn-279, and Arg-281 each contribute to the ATP site. A glycan (N-linked (GlcNAc...) asparagine) is linked at Asn-290. Residue Lys-299 participates in ATP binding. The helical transmembrane segment at Ile-323–Ile-341 threads the bilayer. Topologically, residues Ile-342–His-397 are cytoplasmic. A compositionally biased stretch (polar residues) spans Ser-378 to Gly-391. The tract at residues Ser-378–His-397 is disordered.

Belongs to the P2X receptor family. In terms of assembly, homotrimer. Forms heterotrimer with P2RX2. Heterotrimeric P2RX2/3 has a ligand dose-response profile that is distinct from either homotrimeric P2RX2 or P2RX3.

The protein localises to the cell membrane. The catalysed reaction is Ca(2+)(in) = Ca(2+)(out). It carries out the reaction Na(+)(in) = Na(+)(out). Has high sensitivity to ATP. Fast activation by external ATP. Exhibits rapid desensitization. Sensitives to the ATP agonist:alpha/beta-methylene-ATP. Subject to allosteric inhibition by AF-219. Mg(2+) and Ca(2+) slow deactivation of P2RX3. Functionally, extracellular ATP-activated non-selective cation channel. Plays particularly important role in sensory neurons where its activation is critical for gustatory, nociceptive responses, visceral reflexes and sensory hypersensitization. In Homo sapiens (Human), this protein is P2X purinoceptor 3 (P2RX3).